The following is a 220-amino-acid chain: MNIPPYRTRIKFCGMTRVGDVRLASELGVDAVGLIFASGSSRLLTVSAACAIRRTVAPMVNVVALFQNNSADEIHTVVRTVRPTLLQFHGKEEDAFCRTFNVPYLKAIPMAGAEAKRICTRTLYLKYPNAAGFIFDSHLKGGTGQTFDWSRLPIDLHHPFLLAGGITPENVFDAIAATVPWGVDVSSGIELQPGIKDGDKMRQFVEEVRRADGRRQFGVA.

Belongs to the TrpF family.

It catalyses the reaction N-(5-phospho-beta-D-ribosyl)anthranilate = 1-(2-carboxyphenylamino)-1-deoxy-D-ribulose 5-phosphate. Its pathway is amino-acid biosynthesis; L-tryptophan biosynthesis; L-tryptophan from chorismate: step 3/5. This is N-(5'-phosphoribosyl)anthranilate isomerase from Xylella fastidiosa (strain M12).